Reading from the N-terminus, the 215-residue chain is Pyrophosphatase PpaX (215 aa).

The active-site Nucleophile is the aspartate 9.

It belongs to the HAD-like hydrolase superfamily. PpaX family. Mg(2+) serves as cofactor.

It carries out the reaction diphosphate + H2O = 2 phosphate + H(+). Functionally, hydrolyzes pyrophosphate formed during P-Ser-HPr dephosphorylation by HPrK/P. Might play a role in controlling the intracellular pyrophosphate pool. The polypeptide is Pyrophosphatase PpaX (Halalkalibacterium halodurans (strain ATCC BAA-125 / DSM 18197 / FERM 7344 / JCM 9153 / C-125) (Bacillus halodurans)).